The chain runs to 572 residues: Probable terpene synthase 11 (572 aa).

Mg(2+) is bound by residues D317, D321, and E469. The short motif at 317–321 (DDIFD) is the DDXXD motif element.

It belongs to the terpene synthase family. Requires Mg(2+) as cofactor.

Its function is as follows. Probable sesquiterpene synthase. This Ricinus communis (Castor bean) protein is Probable terpene synthase 11 (TPS11).